Here is a 323-residue protein sequence, read N- to C-terminus: MKETAISVLALLTLFLLEVVSANELSLPFHLPINETIGLEVFQGINNASPPSPSPLPYPQCGMKKGGGKCIKTGECCSIWGWCGTTNAYCSPGYCQKQCPGPYPEGRCGWQANGKSCPTGTGQCCSNGGWCGTTSDYCASKNCQSQCKLPSPPPPPPPPSPPPPSPPSPPPPSPPPPPPPSPPPPSPPPPSPSPPPPPASPPPPPPALPYPQCGIKKGGGKCIKTGECCSIWGWCGTTNAYCSPGYCQKQCPGPYPEGRCGWQANGKSCPTGTGHCCSNAGWCGTTSDYCAPVNCQAQCNTTTLTSPIKNRMRGIESFMLNVV.

An N-terminal signal peptide occupies residues 1-22 (MKETAISVLALLTLFLLEVVSA). A 4-hydroxyproline mark is found at Pro-50, Pro-51, Pro-53, and Pro-55. 4 O-linked (Ara...) hydroxyproline glycosylation sites follow: Pro-50, Pro-51, Pro-53, and Pro-55. 2 Chitin-binding type-1 domains span residues 58-101 (YPQC…QCPG) and 105-149 (EGRC…QCKL). 8 disulfides stabilise this stretch: Cys-61–Cys-77, Cys-70–Cys-83, Cys-76–Cys-90, Cys-95–Cys-99, Cys-108–Cys-125, Cys-117–Cys-131, Cys-124–Cys-138, and Cys-143–Cys-147. Residues Ser-78, Trp-80, Trp-82, and Tyr-89 each coordinate chitin. The interval 150–210 (PSPPPPPPPP…PPPPPPALPY (61 aa)) is extensin-like. O-linked (Gal) serine glycosylation is present at Ser-151. Tandem repeats lie at residues 151 to 159 (SPPPPPPPP), 160 to 164 (SPPPP), 165 to 167 (SPP), 168 to 172 (SPPPP), 173 to 180 (SPPPPPPP), 181 to 185 (SPPPP), 186 to 190 (SPPPP), 191 to 192 (SP), 193 to 198 (SPPPPP), and 200 to 206 (SPPPPPP). The segment at 151–206 (SPPPPPPPPSPPPPSPPSPPPPSPPPPPPPSPPPPSPPPPSPSPPPPPASPPPPPP) is 10 X approximate repeats of S-P-P-P-P. A 4-hydroxyproline mark is found at Pro-152, Pro-153, Pro-154, Pro-155, Pro-156, Pro-157, Pro-158, and Pro-159. O-linked (Ara...) hydroxyproline glycans are attached at residues Pro-152, Pro-153, Pro-154, Pro-155, Pro-156, Pro-157, Pro-158, and Pro-159. The disordered stretch occupies residues 154–203 (PPPPPPSPPPPSPPSPPPPSPPPPPPPSPPPPSPPPPSPSPPPPPASPPP). O-linked (Gal) serine glycosylation is present at Ser-160. 4 positions are modified to 4-hydroxyproline: Pro-161, Pro-162, Pro-163, and Pro-164. Residues Pro-161, Pro-162, Pro-163, and Pro-164 are each glycosylated (O-linked (Ara...) hydroxyproline). A glycan (O-linked (Gal) serine) is linked at Ser-165. Residues Pro-166 and Pro-167 each carry the 4-hydroxyproline modification. 2 O-linked (Ara...) hydroxyproline glycosylation sites follow: Pro-166 and Pro-167. The O-linked (Gal) serine glycan is linked to Ser-168. 4-hydroxyproline is present on residues Pro-169, Pro-170, Pro-171, and Pro-172. O-linked (Ara...) hydroxyproline glycans are attached at residues Pro-169, Pro-170, Pro-171, and Pro-172. Ser-173 is a glycosylation site (O-linked (Gal) serine). 7 positions are modified to 4-hydroxyproline: Pro-174, Pro-175, Pro-176, Pro-177, Pro-178, Pro-179, and Pro-180. Pro-174, Pro-175, Pro-176, Pro-177, Pro-178, Pro-179, and Pro-180 each carry an O-linked (Ara...) hydroxyproline glycan. O-linked (Gal) serine glycosylation is present at Ser-181. A 4-hydroxyproline mark is found at Pro-182, Pro-183, Pro-184, and Pro-185. Pro-182, Pro-183, Pro-184, and Pro-185 each carry an O-linked (Ara...) hydroxyproline glycan. O-linked (Gal) serine glycosylation is present at Ser-186. 4 positions are modified to 4-hydroxyproline: Pro-187, Pro-188, Pro-189, and Pro-190. 4 O-linked (Ara...) hydroxyproline glycosylation sites follow: Pro-187, Pro-188, Pro-189, and Pro-190. Ser-191 is a glycosylation site (O-linked (Gal) serine). At Pro-192 the chain carries 4-hydroxyproline. Residue Pro-192 is glycosylated (O-linked (Ara...) hydroxyproline). O-linked (Gal) serine glycosylation is present at Ser-193. Residues Pro-194, Pro-195, Pro-196, Pro-197, and Pro-198 each carry the 4-hydroxyproline modification. O-linked (Ara...) hydroxyproline glycans are attached at residues Pro-194, Pro-195, Pro-196, Pro-197, and Pro-198. O-linked (Gal) serine glycosylation is present at Ser-200. 7 positions are modified to 4-hydroxyproline: Pro-201, Pro-202, Pro-203, Pro-204, Pro-205, Pro-206, and Pro-209. 7 O-linked (Ara...) hydroxyproline glycosylation sites follow: Pro-201, Pro-202, Pro-203, Pro-204, Pro-205, Pro-206, and Pro-209. Chitin-binding type-1 domains are found at residues 210–253 (YPQC…QCPG) and 257–301 (EGRC…QCNT). 8 disulfide bridges follow: Cys-213-Cys-229, Cys-222-Cys-235, Cys-228-Cys-242, Cys-247-Cys-251, Cys-260-Cys-277, Cys-269-Cys-283, Cys-276-Cys-290, and Cys-295-Cys-299. Residues Ser-230, Trp-232, Trp-234, and Tyr-241 each coordinate chitin.

It in the central section; belongs to the extensin family. In terms of assembly, homodimer. Post-translationally, heavily glycosylated with beta-arabinose on hydroxyprolines and with alpha-galactose on serines of the extensin-like domain. As no other sugars could be detected in the native lectin, it is unlikely that the three putative N-glycosylation sites are actually glycosylated. In terms of processing, the N-terminus is blocked. The N-terminal sequences proposed in PubMed:9022287 and PubMed:11056399 originate probably from truncated proteins.

In terms of biological role, this protein might function as a defense against chitin containing pathogens. Binds to several branched or linear N-acetyllactosamine-containing glycosphingolipids and also to lactosylceramide with sphingosine and non-hydroxy fatty acids. This chain is Chitin-binding lectin 1, found in Solanum tuberosum (Potato).